The following is a 357-amino-acid chain: Protein BMRF2 (357 aa).

Topologically, residues 1-11 are virion surface; sequence MFSCKQHLSLG. The segment at 12-32 is a transmembrane helix; it reads ACVFCLGLLASTPFIWCFVFA. The Virion surface portion of the chain corresponds to 33–46; the sequence is NLLSLEIFSPWQTH. A transmembrane helix spans residues 47 to 67; the sequence is VYRLGFPTACLMAVLWTLVPA. Topologically, residues 68 to 70 are virion surface; sequence KHA. At 71–91 the chain is embedded in the membrane; it reads VRAVTPAIMLNIASALIFFSL. The Virion surface segment spans residues 92–98; that stretch reads RVYSTST. The segment at 99–121 is a transmembrane helix; the sequence is WVSAPCLFLANLPLLCLWPRLAI. Topologically, residues 122 to 133 are virion surface; it reads EIVYICPAIHQR. The segment at 134-154 is a transmembrane helix; that stretch reads FFELGLLLACTIFALSVVSRA. Over 155–158 the chain is Virion surface; the sequence is LEVS. A membrane pass occupies residues 159 to 179; sequence AVFMSPFFIFLALGSGSLAGA. Residues 180–217 lie on the Virion surface side of the membrane; sequence RRNQIYTSGLERRRSIFCARGDHSVASLKETLHKCPWD. The short motif at 199–201 is the Integrin binding site element; sequence RGD. The hydrophobic stretch at 218-238 threads the membrane; sequence LLAISALTVLVVCVMIVLHVH. Over 239-240 the chain is Virion surface; sequence AE. A membrane pass occupies residues 241 to 261; it reads VFFGLSRYLPLFLCGAMASGG. The Virion surface portion of the chain corresponds to 262–267; it reads LYLGHS. A transmembrane span lies at residues 268-288; the sequence is SIIACVMATLCTLTSVVVYFL. The Virion surface segment spans residues 289-298; the sequence is HETLGPLGKT. Positions 299 to 319 form a transmembrane segment; the sequence is VLFISIFVYYFSGVAALSAAM. The Virion surface segment spans residues 320–335; it reads RYKLKKFVNGPLVHLR. A transmembrane span lies at residues 336–356; that stretch reads VVYMCCFVFTFCEYLLVTFIK. A topological domain (virion surface) is located at residue Ser357.

This sequence belongs to the herpesviridae BMRF2 family. As to quaternary structure, interacts with BDLF2. Interacts with host beta1 integrin family. Post-translationally, extensively glycosylated by O-linked oligosaccharides.

It is found in the virion membrane. The protein resides in the host cell membrane. In terms of biological role, facilitates virus attachment to oral epithelial cells by binding to host beta1 integrin family. Participates in rearrangement of cellular actin to increase intercellular contacts by binding BDLF2 and thereby promote virus cell-to-cell spreading. This Homo sapiens (Human) protein is Protein BMRF2.